A 338-amino-acid chain; its full sequence is Replication factor C subunit 3 (338 aa).

An ATP-binding site is contributed by 57 to 64 (GPPGTGKT).

The protein belongs to the activator 1 small subunits family. In terms of assembly, heteropentamer of subunits RFC1, RFC2, RFC3, RFC4 and RFC5 that forms a complex with PCNA in the presence of ATP.

It localises to the nucleus. Its function is as follows. The elongation of primed DNA templates by DNA polymerase delta and epsilon requires the action of the accessory proteins proliferating cell nuclear antigen (PCNA) and activator 1. Subunit 3 binds ATP. The polypeptide is Replication factor C subunit 3 (RFC3) (Blastobotrys adeninivorans (Yeast)).